Reading from the N-terminus, the 495-residue chain is uncharacterized protein (495 aa).

Residues 1–17 (MRTLSLLILFLSTFLFA) form the signal peptide.

This is an uncharacterized protein from Aquifex aeolicus (strain VF5).